A 338-amino-acid chain; its full sequence is Formamidase (338 aa).

A CN hydrolase domain is found at leucine 14–proline 260. Glutamate 60 serves as the catalytic Proton acceptor. Lysine 133 acts as the Proton donor in catalysis. Catalysis depends on cysteine 166, which acts as the Nucleophile.

Belongs to the carbon-nitrogen hydrolase superfamily. Aliphatic amidase family.

The enzyme catalyses formamide + H2O = formate + NH4(+). In terms of biological role, is an aliphatic amidase with a restricted substrate specificity, as it only hydrolyzes formamide. This is Formamidase from Photorhabdus laumondii subsp. laumondii (strain DSM 15139 / CIP 105565 / TT01) (Photorhabdus luminescens subsp. laumondii).